We begin with the raw amino-acid sequence, 254 residues long: Diphthine synthase (254 aa).

Residues Leu11, Asp87, Ile90, Ser115–Val116, Leu167, Leu208, and His233 contribute to the S-adenosyl-L-methionine site.

This sequence belongs to the diphthine synthase family. Homodimer.

The enzyme catalyses 2-[(3S)-amino-3-carboxypropyl]-L-histidyl-[translation elongation factor 2] + 3 S-adenosyl-L-methionine = diphthine-[translation elongation factor 2] + 3 S-adenosyl-L-homocysteine + 3 H(+). The protein operates within protein modification; peptidyl-diphthamide biosynthesis. In terms of biological role, S-adenosyl-L-methionine-dependent methyltransferase that catalyzes the trimethylation of the amino group of the modified target histidine residue in translation elongation factor 2 (EF-2), to form an intermediate called diphthine. The three successive methylation reactions represent the second step of diphthamide biosynthesis. The protein is Diphthine synthase of Metallosphaera sedula (strain ATCC 51363 / DSM 5348 / JCM 9185 / NBRC 15509 / TH2).